Here is a 297-residue protein sequence, read N- to C-terminus: N-acetylmannosamine kinase (297 aa).

Residues 5-12 and 132-139 contribute to the ATP site; these read ALDIGGTK and GVGGGIIL. Zn(2+) is bound by residues His-156, Cys-166, Cys-168, and Cys-173.

It belongs to the ROK (NagC/XylR) family. NanK subfamily. In terms of assembly, homodimer.

The enzyme catalyses an N-acyl-D-mannosamine + ATP = an N-acyl-D-mannosamine 6-phosphate + ADP + H(+). It participates in amino-sugar metabolism; N-acetylneuraminate degradation; D-fructose 6-phosphate from N-acetylneuraminate: step 2/5. Its function is as follows. Catalyzes the phosphorylation of N-acetylmannosamine (ManNAc) to ManNAc-6-P. The chain is N-acetylmannosamine kinase from Pasteurella multocida (strain Pm70).